We begin with the raw amino-acid sequence, 238 residues long: CD63 antigen (238 aa).

Residues 1–11 are Cytoplasmic-facing; the sequence is MAVEGGMKCVK. The helical transmembrane segment at 12-32 threads the bilayer; it reads FLLYVLLLAFCACAVGLIAVG. At 33–51 the chain is on the extracellular side; it reads VGAQLVLSQTITHGATPGS. Residues 52 to 72 form a helical membrane-spanning segment; sequence LLPVVIIAVGAFLFLVAFVGC. Residues 73–81 lie on the Cytoplasmic side of the membrane; the sequence is CGTCKENYC. A helical membrane pass occupies residues 82-102; that stretch reads LMITFAIFLSLIMLVEVAAAI. The Extracellular segment spans residues 103–203; it reads AGYVFRDKVM…KIGLWLRKNV (101 aa). 4 N-linked (GlcNAc...) asparagine glycosylation sites follow: N125, N130, N150, and N172. A helical membrane pass occupies residues 204-224; it reads LVVAAAALGIAFVEVLGIVFA. Residues 225 to 238 lie on the Cytoplasmic side of the membrane; that stretch reads CCLVKSIRSGYEVM. Positions 234–238 match the Lysosomal targeting motif motif; sequence GYEVM.

The protein belongs to the tetraspanin (TM4SF) family. Interacts with TIMP1 and ITGB1 and recruits TIMP1 to ITGB1. Interacts with CD9. Identified in a complex with CD9 and ITGB3. Interacts with PMEL. Interacts with KDR/VEGFR2; identified in a complex with ITGB1 and KDR/VEGFR2 and is required to recruit KDR to ITGB1 complexes. Interacts with SYT7. In terms of processing, palmitoylated at a low, basal level in unstimulated platelets. The level of palmitoylation increases when platelets are activated by thrombin (in vitro).

Its subcellular location is the cell membrane. The protein resides in the lysosome membrane. It localises to the late endosome membrane. It is found in the endosome. The protein localises to the multivesicular body. Its subcellular location is the melanosome. The protein resides in the secreted. It localises to the extracellular exosome. It is found in the cell surface. Its function is as follows. Functions as a cell surface receptor for TIMP1 and plays a role in the activation of cellular signaling cascades. Plays a role in the activation of ITGB1 and integrin signaling, leading to the activation of AKT, FAK/PTK2 and MAP kinases. Promotes cell survival, reorganization of the actin cytoskeleton, cell adhesion, spreading and migration, via its role in the activation of AKT and FAK/PTK2. Plays a role in VEGFA signaling via its role in regulating the internalization of KDR/VEGFR2. Plays a role in intracellular vesicular transport processes, and is required for normal trafficking of the PMEL luminal domain that is essential for the development and maturation of melanocytes. Plays a role in the adhesion of leukocytes onto endothelial cells via its role in the regulation of SELP trafficking. May play a role in mast cell degranulation in response to Ms4a2/FceRI stimulation, but not in mast cell degranulation in response to other stimuli. This chain is CD63 antigen (CD63), found in Oryctolagus cuniculus (Rabbit).